Consider the following 277-residue polypeptide: Small ribosomal subunit protein uS3 (277 aa).

Residues 43 to 111 (IRELMSKGMD…QIQLNILEVK (69 aa)) form the KH type-2 domain. A disordered region spans residues 217–277 (AAQQAAAPSS…AEANNAEGGK (61 aa)). The span at 245 to 258 (NDRNDRGGRRERDS) shows a compositional bias: basic and acidic residues. Over residues 259–277 (AAAPQQNSAAEANNAEGGK) the composition is skewed to low complexity.

This sequence belongs to the universal ribosomal protein uS3 family. Part of the 30S ribosomal subunit. Forms a tight complex with proteins S10 and S14.

Binds the lower part of the 30S subunit head. Binds mRNA in the 70S ribosome, positioning it for translation. The chain is Small ribosomal subunit protein uS3 from Kocuria rhizophila (strain ATCC 9341 / DSM 348 / NBRC 103217 / DC2201).